Reading from the N-terminus, the 623-residue chain is Serine/threonine-protein kinase ArnS (623 aa).

2 helical membrane-spanning segments follow: residues 13-33 (MILISVFSYVLIALIVLGIVL) and 49-69 (VYLIGLTVYLNPGFSLTQSLI). A Protein kinase domain is found at 317–623 (YRVIEVIGLG…SYDIVKILEG (307 aa)). Residues 323–331 (IGLGGNGYV) and Lys344 contribute to the ATP site. The active-site Proton acceptor is Asp460.

The protein belongs to the protein kinase superfamily. Ser/Thr protein kinase family. In terms of processing, autophosphorylated.

Its subcellular location is the cell membrane. It catalyses the reaction L-seryl-[protein] + ATP = O-phospho-L-seryl-[protein] + ADP + H(+). It carries out the reaction L-threonyl-[protein] + ATP = O-phospho-L-threonyl-[protein] + ADP + H(+). With respect to regulation, autophosphorylation is stimulated by Mn(2+). Plays an essential role in the controlled expression of archaellum components during starvation-induced motility. May inhibit arnR transcription and promote ArnR translation. The sequence is that of Serine/threonine-protein kinase ArnS from Sulfolobus acidocaldarius (strain ATCC 33909 / DSM 639 / JCM 8929 / NBRC 15157 / NCIMB 11770).